Here is a 137-residue protein sequence, read N- to C-terminus: Small integral membrane protein 9 (137 aa).

Positions 1–23 (MKPLKLFCIGLLLCPLVCLLLET) are cleaved as a signal peptide. Residues 24-84 (APPPSALLTL…NHLSDFFKSS (61 aa)) lie on the Extracellular side of the membrane. Residues 85 to 105 (IPPAAIFALFVTTAIMRAAIV) form a helical membrane-spanning segment. Topologically, residues 106–137 (NKRLEEPHRQWTIDQRSSLEMQNMNLIKLFGG) are cytoplasmic.

It localises to the cell membrane. This Mus musculus (Mouse) protein is Small integral membrane protein 9 (Smim9).